Consider the following 315-residue polypeptide: tRNA-dihydrouridine(16) synthase (315 aa).

FMN is bound by residues 7 to 9 and Gln-68; that span reads PME. Cys-98 serves as the catalytic Proton donor. Residues Lys-139, 199–201, and 223–224 each bind FMN; these read NGE and GR.

The protein belongs to the Dus family. DusC subfamily. FMN is required as a cofactor.

It catalyses the reaction 5,6-dihydrouridine(16) in tRNA + NADP(+) = uridine(16) in tRNA + NADPH + H(+). The catalysed reaction is 5,6-dihydrouridine(16) in tRNA + NAD(+) = uridine(16) in tRNA + NADH + H(+). Its function is as follows. Catalyzes the synthesis of 5,6-dihydrouridine (D), a modified base found in the D-loop of most tRNAs, via the reduction of the C5-C6 double bond in target uridines. Specifically modifies U16 in tRNAs. The protein is tRNA-dihydrouridine(16) synthase of Shewanella oneidensis (strain ATCC 700550 / JCM 31522 / CIP 106686 / LMG 19005 / NCIMB 14063 / MR-1).